A 122-amino-acid chain; its full sequence is Small ribosomal subunit protein uS13 (122 aa).

Residues 95–122 (GLPVRGQRTKTNARTRKGPKKTIAGKKK) are disordered.

It belongs to the universal ribosomal protein uS13 family. Part of the 30S ribosomal subunit. Forms a loose heterodimer with protein S19. Forms two bridges to the 50S subunit in the 70S ribosome.

Its function is as follows. Located at the top of the head of the 30S subunit, it contacts several helices of the 16S rRNA. In the 70S ribosome it contacts the 23S rRNA (bridge B1a) and protein L5 of the 50S subunit (bridge B1b), connecting the 2 subunits; these bridges are implicated in subunit movement. Contacts the tRNAs in the A and P-sites. This chain is Small ribosomal subunit protein uS13, found in Corynebacterium diphtheriae (strain ATCC 700971 / NCTC 13129 / Biotype gravis).